Consider the following 181-residue polypeptide: Regulator of G-protein signaling 5 (181 aa).

The 117-residue stretch at 64–180 folds into the RGS domain; the sequence is SLDKLLQSNY…VRSEFYKELI (117 aa).

Its subcellular location is the cytoplasm. The protein resides in the membrane. Its function is as follows. Inhibits signal transduction by increasing the GTPase activity of G protein alpha subunits thereby driving them into their inactive GDP-bound form. Binds to G(i)-alpha and G(o)-alpha, but not to G(s)-alpha. This is Regulator of G-protein signaling 5 (Rgs5) from Rattus norvegicus (Rat).